Consider the following 568-residue polypeptide: Urease subunit alpha (568 aa).

The Urease domain maps to 132 to 568; that stretch reads GAIDTHVHYI…LPLAQLYNLF (437 aa). Residues His137, His139, and Lys219 each coordinate Ni(2+). Lys219 is modified (N6-carboxylysine). Residue His221 participates in substrate binding. The Ni(2+) site is built by His248 and His274. Catalysis depends on His322, which acts as the Proton donor. A Ni(2+)-binding site is contributed by Asp362.

Belongs to the metallo-dependent hydrolases superfamily. Urease alpha subunit family. As to quaternary structure, heterotrimer of UreA (gamma), UreB (beta) and UreC (alpha) subunits. Three heterotrimers associate to form the active enzyme. Ni cation serves as cofactor. Post-translationally, carboxylation allows a single lysine to coordinate two nickel ions.

It localises to the cytoplasm. It catalyses the reaction urea + 2 H2O + H(+) = hydrogencarbonate + 2 NH4(+). It functions in the pathway nitrogen metabolism; urea degradation; CO(2) and NH(3) from urea (urease route): step 1/1. This chain is Urease subunit alpha, found in Azobacteroides pseudotrichonymphae genomovar. CFP2.